Here is a 509-residue protein sequence, read N- to C-terminus: Cytochrome P450 4A10 (509 aa).

The next 2 helical transmembrane spans lie at 11–31 (FTGS…LLLL) and 121–141 (LLAP…WFQH). Glu-320 contributes to the heme binding site. Ser-439 is modified (phosphoserine). Cys-456 is a heme binding site.

It belongs to the cytochrome P450 family. It depends on heme as a cofactor. In terms of tissue distribution, expressed in liver (at protein level) and kidney (at protein level).

It is found in the endoplasmic reticulum membrane. The protein localises to the microsome membrane. The enzyme catalyses an omega-methyl-long-chain fatty acid + reduced [NADPH--hemoprotein reductase] + O2 = an omega-hydroxy-long-chain fatty acid + oxidized [NADPH--hemoprotein reductase] + H2O + H(+). It catalyses the reaction dodecanoate + reduced [NADPH--hemoprotein reductase] + O2 = 12-hydroxydodecanoate + oxidized [NADPH--hemoprotein reductase] + H2O + H(+). The catalysed reaction is dodecanoate + reduced [NADPH--hemoprotein reductase] + O2 = 11-hydroxydodecanoate + oxidized [NADPH--hemoprotein reductase] + H2O + H(+). It carries out the reaction tetradecanoate + reduced [NADPH--hemoprotein reductase] + O2 = 14-hydroxytetradecanoate + oxidized [NADPH--hemoprotein reductase] + H2O + H(+). The enzyme catalyses hexadecanoate + reduced [NADPH--hemoprotein reductase] + O2 = 16-hydroxyhexadecanoate + oxidized [NADPH--hemoprotein reductase] + H2O + H(+). It catalyses the reaction (9Z)-octadecenoate + reduced [NADPH--hemoprotein reductase] + O2 = 18-hydroxy-(9Z)-octadecenoate + oxidized [NADPH--hemoprotein reductase] + H2O + H(+). The catalysed reaction is (9Z,12Z)-octadecadienoate + reduced [NADPH--hemoprotein reductase] + O2 = 18-hydroxy-(9Z,12Z)-octadecadienoate + oxidized [NADPH--hemoprotein reductase] + H2O + H(+). It carries out the reaction (9Z,12Z)-octadecadienoate + reduced [NADPH--hemoprotein reductase] + O2 = 17-hydroxy-(9Z,12Z)-octadecadienoate + oxidized [NADPH--hemoprotein reductase] + H2O + H(+). The enzyme catalyses (5Z,8Z,11Z,14Z)-eicosatetraenoate + reduced [NADPH--hemoprotein reductase] + O2 = 20-hydroxy-(5Z,8Z,11Z,14Z)-eicosatetraenoate + oxidized [NADPH--hemoprotein reductase] + H2O + H(+). It catalyses the reaction 8,9-epoxy-(5Z,11Z,14Z)-eicosatrienoate + reduced [NADPH--hemoprotein reductase] + O2 = 20-hydroxy-8,9-epoxy-(5Z,11Z,14Z)-eicosatrienoate + oxidized [NADPH--hemoprotein reductase] + H2O + H(+). A cytochrome P450 monooxygenase involved in the metabolism of fatty acids. Catalyzes predominantly the oxidation of the terminal carbon (omega-oxidation) of long-chain fatty acids. Acts as a major omega-hydroxylase for dodecanoic (lauric) acid in liver. In kidney, may play an important role in omega-hydroxylation of (5Z,8Z,11Z,14Z)-eicosatetraenoic acid (arachidonate) to 20-hydroxyeicosatetraenoic acid (20-HETE), a signaling molecule acting both as vasoconstrictive and natriuretic with overall effect on arterial blood pressure. Also participates in the formation of anti-inflammatory hydroxyepoxyeicosatrienoic acids (HEETs) in kidney by converting 8,9-epoxyeicosatrienoic acid (EET) to 20,8,9-HEET, an activator of PPARA. Displays substantially lower fatty acid omega-1 hydroxylase activity. Mechanistically, uses molecular oxygen inserting one oxygen atom into a substrate, and reducing the second into a water molecule, with two electrons provided by NADPH via cytochrome P450 reductase (CPR; NADPH-ferrihemoprotein reductase). The chain is Cytochrome P450 4A10 (Cyp4a10) from Rattus norvegicus (Rat).